The following is a 116-amino-acid chain: NADH-ubiquinone oxidoreductase chain 3 (116 aa).

3 helical membrane-spanning segments follow: residues 3 to 23 (LITTIITITITLSAVLATISF), 56 to 76 (FFLIAILFLLFDLEIALLLPL), and 87 to 107 (LTLIWSTAVLALLTLGLIYEW).

It belongs to the complex I subunit 3 family.

It localises to the mitochondrion membrane. It carries out the reaction a ubiquinone + NADH + 5 H(+)(in) = a ubiquinol + NAD(+) + 4 H(+)(out). In terms of biological role, core subunit of the mitochondrial membrane respiratory chain NADH dehydrogenase (Complex I) that is believed to belong to the minimal assembly required for catalysis. Complex I functions in the transfer of electrons from NADH to the respiratory chain. The immediate electron acceptor for the enzyme is believed to be ubiquinone. This chain is NADH-ubiquinone oxidoreductase chain 3 (MT-ND3), found in Oncorhynchus mykiss (Rainbow trout).